Consider the following 663-residue polypeptide: Fructose-1,6-bisphosphatase class 3 1 (663 aa).

This sequence belongs to the FBPase class 3 family. Requires Mn(2+) as cofactor.

It carries out the reaction beta-D-fructose 1,6-bisphosphate + H2O = beta-D-fructose 6-phosphate + phosphate. It functions in the pathway carbohydrate biosynthesis; gluconeogenesis. This is Fructose-1,6-bisphosphatase class 3 1 from Clostridium beijerinckii (strain ATCC 51743 / NCIMB 8052) (Clostridium acetobutylicum).